Here is a 157-residue protein sequence, read N- to C-terminus: MSRRNRAPKRDILPDPKYKSQVVAKFVNHIMLSGKKSIAEKIVYGAFDKIKAKDASANEVEVFEKALESVSPMVEVKSRRVGGATYQVPVEVRPERRQTLGMRWIIDAARKRKENTMGDRLAAEILEAVEGRGAAVKKREDTHKMAEANKAFAHFRW.

Belongs to the universal ribosomal protein uS7 family. Part of the 30S ribosomal subunit. Contacts proteins S9 and S11.

In terms of biological role, one of the primary rRNA binding proteins, it binds directly to 16S rRNA where it nucleates assembly of the head domain of the 30S subunit. Is located at the subunit interface close to the decoding center, probably blocks exit of the E-site tRNA. The protein is Small ribosomal subunit protein uS7 of Francisella tularensis subsp. holarctica (strain OSU18).